A 690-amino-acid chain; its full sequence is MGLLSIGTPLSWDESKKYNNHVRTNGITQLINIFKQHGYRENDVFLWGDEVEYMLVDFDETKKTARLSIDKDYIINDLNDPDKLLPIAEKQDVSYHPEYGRFMVEATPAKPYNGNLLSDYLYIEKNMIIRRQLCEDNLPSHIKLLTLTTFPRMGCNIFTSPPSKPDGIASQSLFLPDEIINRHARFPTLTANIRKRKGHKVAINLPIYPDKSTKLLDDTIPQNRELFDSDKEPWIGASKPGFIYMDSMGFGMGSSCLQITMQTKNISQARYLYDSLAPIAPIMLSLSAAAPIFKGFLVDQDVRWNVVSGAVDDRTFIEKGQEPYSGYHLFGGLDIDAQDKLRINNHQINQQGDLLDLYTKDGKPIQRVPQSRYDSIDNYLNDNYYDTKYFQDEYNDLNAPINEQVYQRLIDEGKLDKYMANHFAHLFIRDPLVIFSERINQDNNLENDHFENIQSTNWQTLRFKPPALYTKDTDLTTKPGWRVEFRPMEIQLTDFENAAYSSFITLLSKAILKFQPNFYIPLSKVEINMKLAHKVDSTLKDKFWFRSFELWNIDPQEFDDYGFEWFDQFINGNQQQNGHVNNNNNNDKKTKNDPIIVNGSTTTTNGTNSGSGITETNGTMLPKGCEGKTVEEINDVDDNGIDQRYTICQLINGSGEFPGFIKLVIKLIATDLVPQALNNSTISKEQLIEN.

Low complexity-rich tracts occupy residues 574–585 (QQQNGHVNNNNN) and 598–619 (NGSTTTTNGTNSGSGITETNGT). Residues 574-620 (QQQNGHVNNNNNNDKKTKNDPIIVNGSTTTTNGTNSGSGITETNGTM) form a disordered region.

The protein belongs to the glutamate--cysteine ligase type 3 family.

It catalyses the reaction L-cysteine + L-glutamate + ATP = gamma-L-glutamyl-L-cysteine + ADP + phosphate + H(+). It functions in the pathway sulfur metabolism; glutathione biosynthesis; glutathione from L-cysteine and L-glutamate: step 1/2. The chain is Glutamate--cysteine ligase (GCS1) from Candida albicans (Yeast).